Reading from the N-terminus, the 524-residue chain is GMP synthase [glutamine-hydrolyzing] (524 aa).

The Glutamine amidotransferase type-1 domain maps to proline 10 to threonine 199. Residue cysteine 87 is the Nucleophile of the active site. Residues histidine 173 and glutamate 175 contribute to the active site. One can recognise a GMPS ATP-PPase domain in the interval tryptophan 200–arginine 398. Residue serine 228–alanine 234 coordinates ATP.

Homodimer.

It catalyses the reaction XMP + L-glutamine + ATP + H2O = GMP + L-glutamate + AMP + diphosphate + 2 H(+). It functions in the pathway purine metabolism; GMP biosynthesis; GMP from XMP (L-Gln route): step 1/1. Its function is as follows. Catalyzes the synthesis of GMP from XMP. The sequence is that of GMP synthase [glutamine-hydrolyzing] (guaA) from Corynebacterium ammoniagenes (Brevibacterium ammoniagenes).